Reading from the N-terminus, the 247-residue chain is V-type proton ATPase subunit D (247 aa).

Belongs to the V-ATPase D subunit family. V-ATPase is a heteromultimeric enzyme made up of two complexes: the ATP-hydrolytic V1 complex and the proton translocation V0 complex. The V1 complex consists of three catalytic AB heterodimers that form a heterohexamer, three peripheral stalks each consisting of EG heterodimers, one central rotor including subunits D and F, and the regulatory subunits C and H. The proton translocation complex V0 consists of the proton transport subunit a, a ring of proteolipid subunits c9c'', rotary subunit d, subunits e and f, and the accessory subunits ATP6AP1/Ac45 and ATP6AP2/PRR. Interacts with SNX10.

It is found in the membrane. Its subcellular location is the cytoplasmic vesicle. It localises to the clathrin-coated vesicle membrane. The protein resides in the cytoplasm. The protein localises to the cytoskeleton. It is found in the microtubule organizing center. Its subcellular location is the centrosome. It localises to the cell projection. The protein resides in the cilium. Its function is as follows. Subunit of the V1 complex of vacuolar(H+)-ATPase (V-ATPase), a multisubunit enzyme composed of a peripheral complex (V1) that hydrolyzes ATP and a membrane integral complex (V0) that translocates protons. V-ATPase is responsible for acidifying and maintaining the pH of intracellular compartments and in some cell types, is targeted to the plasma membrane, where it is responsible for acidifying the extracellular environment. May play a role in cilium biogenesis through regulation of the transport and the localization of proteins to the cilium. This is V-type proton ATPase subunit D (Atp6v1d) from Mus musculus (Mouse).